The chain runs to 214 residues: Thiamine-phosphate synthase (214 aa).

Residues 37–41 (QYREK) and Asn-73 each bind 4-amino-2-methyl-5-(diphosphooxymethyl)pyrimidine. Positions 74 and 93 each coordinate Mg(2+). Residue Ser-112 coordinates 4-amino-2-methyl-5-(diphosphooxymethyl)pyrimidine. A 2-[(2R,5Z)-2-carboxy-4-methylthiazol-5(2H)-ylidene]ethyl phosphate-binding site is contributed by 139–141 (TIS). Lys-142 serves as a coordination point for 4-amino-2-methyl-5-(diphosphooxymethyl)pyrimidine. Residues Gly-171 and 191–192 (IS) each bind 2-[(2R,5Z)-2-carboxy-4-methylthiazol-5(2H)-ylidene]ethyl phosphate.

Belongs to the thiamine-phosphate synthase family. Mg(2+) is required as a cofactor.

It catalyses the reaction 2-[(2R,5Z)-2-carboxy-4-methylthiazol-5(2H)-ylidene]ethyl phosphate + 4-amino-2-methyl-5-(diphosphooxymethyl)pyrimidine + 2 H(+) = thiamine phosphate + CO2 + diphosphate. The enzyme catalyses 2-(2-carboxy-4-methylthiazol-5-yl)ethyl phosphate + 4-amino-2-methyl-5-(diphosphooxymethyl)pyrimidine + 2 H(+) = thiamine phosphate + CO2 + diphosphate. It carries out the reaction 4-methyl-5-(2-phosphooxyethyl)-thiazole + 4-amino-2-methyl-5-(diphosphooxymethyl)pyrimidine + H(+) = thiamine phosphate + diphosphate. Its pathway is cofactor biosynthesis; thiamine diphosphate biosynthesis; thiamine phosphate from 4-amino-2-methyl-5-diphosphomethylpyrimidine and 4-methyl-5-(2-phosphoethyl)-thiazole: step 1/1. Condenses 4-methyl-5-(beta-hydroxyethyl)thiazole monophosphate (THZ-P) and 2-methyl-4-amino-5-hydroxymethyl pyrimidine pyrophosphate (HMP-PP) to form thiamine monophosphate (TMP). This Listeria innocua serovar 6a (strain ATCC BAA-680 / CLIP 11262) protein is Thiamine-phosphate synthase.